Here is a 644-residue protein sequence, read N- to C-terminus: Replication protein E1 (644 aa).

The Nuclear localization signal signature appears at 86–88; sequence KRK. The interval 146 to 177 is disordered; that stretch reads QVESQNGDADLNDSESSGVGASSDVSSETDVD. Low complexity predominate over residues 159-173; it reads SESSGVGASSDVSSE. Positions 179–345 are DNA-binding region; that stretch reads CNTVPLQNIS…LTVLQHSFND (167 aa). The 151-residue stretch at 444–594 folds into the SF3 helicase domain; sequence IEFTAFLVAF…FPFDANGNPV (151 aa). 470–477 is an ATP binding site; it reads GPANTGKS. Lys551 is covalently cross-linked (Glycyl lysine isopeptide (Lys-Gly) (interchain with G-Cter in SUMO)).

It belongs to the papillomaviridae E1 protein family. Can form hexamers. Interacts with E2 protein; this interaction increases E1 DNA binding specificity. Interacts with host DNA polymerase subunit POLA2. Interacts with host single stranded DNA-binding protein RPA1. Interacts with host TOP1; this interaction stimulates the enzymatic activity of TOP1. Post-translationally, phosphorylated. In terms of processing, sumoylated.

The protein localises to the host nucleus. The catalysed reaction is Couples ATP hydrolysis with the unwinding of duplex DNA by translocating in the 3'-5' direction.. It catalyses the reaction ATP + H2O = ADP + phosphate + H(+). In terms of biological role, ATP-dependent DNA 3'-5' helicase required for initiation of viral DNA replication. It forms a complex with the viral E2 protein. The E1-E2 complex binds to the replication origin which contains binding sites for both proteins. During the initial step, a dimer of E1 interacts with a dimer of protein E2 leading to a complex that binds the viral origin of replication with high specificity. Then, a second dimer of E1 displaces the E2 dimer in an ATP-dependent manner to form the E1 tetramer. Following this, two E1 monomers are added to each half of the site, which results in the formation of two E1 trimers on the viral ori. Subsequently, two hexamers will be created. The double hexamer acts as a bi-directional helicase machinery and unwinds the viral DNA and then recruits the host DNA polymerase to start replication. The protein is Replication protein E1 of Homo sapiens (Human).